Reading from the N-terminus, the 204-residue chain is Tumor necrosis factor receptor superfamily member 26 (204 aa).

The N-terminal stretch at 1–19 is a signal peptide; that stretch reads MTRLRLLLLLGLLLRVAVC. At 20–164 the chain is on the extracellular side; the sequence is SVNTITLCKI…SQCFCFSKPL (145 aa). 9 disulfides stabilise this stretch: C27–C38, C39–C52, C42–C61, C64–C79, C82–C95, C85–C103, C105–C120, C123–C135, and C126–C143. TNFR-Cys repeat units follow at residues 27-61, 63-103, and 104-143; these read CKIG…KSEC, PCDS…DRVC, and QCKQ…DTVC. N57 is a glycosylation site (N-linked (GlcNAc...) asparagine). N136 carries N-linked (GlcNAc...) asparagine glycosylation. Residues 165-185 traverse the membrane as a helical segment; sequence GIVVIIAAFIIIIGAVIILIL. Residues 186 to 204 are Cytoplasmic-facing; sequence KIICYCKRGENIQLSSTML.

In terms of tissue distribution, expressed in thymus and spleen. Detectable levels in lung.

It is found in the membrane. This chain is Tumor necrosis factor receptor superfamily member 26 (Tnfrsf26), found in Mus musculus (Mouse).